The primary structure comprises 1102 residues: Phosphatidylinositol 4,5-bisphosphate 3-kinase catalytic subunit gamma isoform (1102 aa).

The PI3K-ABD domain occupies 34 to 141 (SMELIPIEFV…PGQIHLVQRH (108 aa)). Positions 217–309 (NNCIFIVIHR…GEEIHVVLDT (93 aa)) constitute a PI3K-RBD domain. The 165-residue stretch at 357–521 (CDRKFRVKIR…NSMSISILLD (165 aa)) folds into the C2 PI3K-type domain. Residues 541 to 723 (DRVRAEMPNQ…AVILEAYLRG (183 aa)) form the PIK helical domain. The PI3K/PI4K catalytic domain maps to 797–1080 (AIEKCKVMAS…QIEVCRDKGW (284 aa)). The interval 803 to 809 (VMASKKK) is G-loop. Residues 829–838 (GIIFKHGDDL) and 864–872 (LLPYGCIST) each bind ATP. The catalytic loop stretch occupies residues 943 to 951 (GIGDRHNDN). 961–969 (FHIDFGHIL) is an ATP binding site. An activation loop region spans residues 962 to 988 (HIDFGHILGNYKSFLGINKERVPFVLT). T1024 carries the post-translational modification Phosphothreonine; by PKA. S1101 is modified (phosphoserine; by autocatalysis).

It belongs to the PI3/PI4-kinase family. In terms of assembly, heterodimer of a catalytic subunit PIK3CG and a PIK3R5 or PIK3R6 regulatory subunit. Interacts with GRK2 through the PIK helical domain. Interaction with GRK2 is required for targeting to agonist-occupied receptor. Interacts with PDE3B; regulates PDE3B activity and thereby cAMP levels in cells. Interacts with TPM2. Interacts with EPHA8; regulates integrin-mediated cell adhesion to substrate. Interacts with HRAS; the interaction is required for membrane recruitment and beta-gamma G protein dimer-dependent activation of the PI3K gamma complex PIK3CG:PIK3R6. In terms of processing, autophosphorylation at Ser-1101 has no effect on the phosphatidylinositol-4,5-bisphosphate 3-kinase activity. Pancreas, skeletal muscle, liver and heart.

It is found in the cytoplasm. The protein localises to the cell membrane. It catalyses the reaction a 1,2-diacyl-sn-glycero-3-phospho-(1D-myo-inositol) + ATP = a 1,2-diacyl-sn-glycero-3-phospho-(1D-myo-inositol-3-phosphate) + ADP + H(+). It carries out the reaction a 1,2-diacyl-sn-glycero-3-phospho-(1D-myo-inositol-4,5-bisphosphate) + ATP = a 1,2-diacyl-sn-glycero-3-phospho-(1D-myo-inositol-3,4,5-trisphosphate) + ADP + H(+). The enzyme catalyses a 1,2-diacyl-sn-glycero-3-phospho-(1D-myo-inositol 4-phosphate) + ATP = a 1,2-diacyl-sn-glycero-3-phospho-(1D-myo-inositol-3,4-bisphosphate) + ADP + H(+). The catalysed reaction is L-seryl-[protein] + ATP = O-phospho-L-seryl-[protein] + ADP + H(+). It functions in the pathway phospholipid metabolism; phosphatidylinositol phosphate biosynthesis. With respect to regulation, activated by both the alpha and the beta-gamma G proteins following stimulation of G protein-coupled receptors (GPCRs). Activation by GPCRs is assisted by the regulatory subunits (PIK3R5 or PIK3R6) leading to the translocation from the cytosol to the plasma membrane and to kinase activation. Inhibited by AS-604850 and AS-605240. In terms of biological role, phosphoinositide-3-kinase (PI3K) that phosphorylates PtdIns(4,5)P2 (Phosphatidylinositol 4,5-bisphosphate) to generate phosphatidylinositol 3,4,5-trisphosphate (PIP3). PIP3 plays a key role by recruiting PH domain-containing proteins to the membrane, including AKT1 and PDPK1, activating signaling cascades involved in cell growth, survival, proliferation, motility and morphology. Links G-protein coupled receptor activation to PIP3 production. Involved in immune, inflammatory and allergic responses. Modulates leukocyte chemotaxis to inflammatory sites and in response to chemoattractant agents. May control leukocyte polarization and migration by regulating the spatial accumulation of PIP3 and by regulating the organization of F-actin formation and integrin-based adhesion at the leading edge. Controls motility of dendritic cells. Together with PIK3CD is involved in natural killer (NK) cell development and migration towards the sites of inflammation. Participates in T-lymphocyte migration. Regulates T-lymphocyte proliferation, activation, and cytokine production. Together with PIK3CD participates in T-lymphocyte development. Required for B-lymphocyte development and signaling. Together with PIK3CD participates in neutrophil respiratory burst. Together with PIK3CD is involved in neutrophil chemotaxis and extravasation. Together with PIK3CB promotes platelet aggregation and thrombosis. Regulates alpha-IIb/beta-3 integrins (ITGA2B/ ITGB3) adhesive function in platelets downstream of P2Y12 through a lipid kinase activity-independent mechanism. May have also a lipid kinase activity-dependent function in platelet aggregation. Involved in endothelial progenitor cell migration. Negative regulator of cardiac contractility. Modulates cardiac contractility by anchoring protein kinase A (PKA) and PDE3B activation, reducing cAMP levels. Regulates cardiac contractility also by promoting beta-adrenergic receptor internalization by binding to GRK2 and by non-muscle tropomyosin phosphorylation. Also has serine/threonine protein kinase activity: both lipid and protein kinase activities are required for beta-adrenergic receptor endocytosis. May also have a scaffolding role in modulating cardiac contractility. Contributes to cardiac hypertrophy under pathological stress. Through simultaneous binding of PDE3B to RAPGEF3 and PIK3R6 is assembled in a signaling complex in which the PI3K gamma complex is activated by RAPGEF3 and which is involved in angiogenesis. In neutrophils, participates in a phospholipase C-activating N-formyl peptide-activated GPCR (G protein-coupled receptor) signaling pathway downstream of RASGRP4-mediated Ras-activation, to promote neutrophil functional responses. The sequence is that of Phosphatidylinositol 4,5-bisphosphate 3-kinase catalytic subunit gamma isoform (PIK3CG) from Homo sapiens (Human).